A 596-amino-acid polypeptide reads, in one-letter code: Mitoguardin 2 (596 aa).

2 consecutive transmembrane segments (helical) span residues 11 to 31 (IMQALAMTVAEIPVFLYSTFG) and 40 to 60 (LSPSLKKVLFATALGSVALAL). 2 disordered regions span residues 67–158 (RRGR…AAWE) and 576–596 (ALPKSPCQAESGNLDASGQQD). Positions 110-123 (MSPSTRSNDTLSGV) are enriched in polar residues. Low complexity predominate over residues 124–140 (SSIAQSKHSSSSHSIAS). Composition is skewed to polar residues over residues 143 to 152 (VPSSPNQSVN) and 583 to 596 (QAESGNLDASGQQD).

The protein belongs to the mitoguardin family. As to quaternary structure, homodimer and heterodimer; forms heterodimers with miga1.

The protein localises to the mitochondrion outer membrane. Functionally, regulator of mitochondrial fusion: acts by forming homo- and heterodimers at the mitochondrial outer membrane and facilitating the formation of pld6/MitoPLD dimers. May act by regulating phospholipid metabolism via pld6/MitoPLD. This Danio rerio (Zebrafish) protein is Mitoguardin 2.